The chain runs to 440 residues: MTREKLLYLETFGCQMNVSDSEKIAALLKGIGYFPTQDSSQADLVILNTCSVRAKAEEKVYNHLVQYKGLKRKKPGIILGVGGCVAQQEGERLLANVPHLDIVFGTHNLHLLPELVRAAEKGERLAEVGFIDNETRLDLFPVDERTDGVSRFVTVMQGCENFCSYCIVPYVRGREISRRSADILGEVRGMAGNGVKEVTLLGQNVNSYGLKSSGEMSFIALLREVSLIPGIERIRFTTSHPKDFSQPLIDCFAEIPKLCRHIHLPAQSGSNAVLAAMNRGYTREEYLGSIARLKAACPSIQITGDIIVGFPGETEEDFQATLSLMEEVRYTDVFSFIYSKRPETKAAGYADEVGQDEKQGRLSRLLDLQRRITLETNKSFVGTVQQVLIEGESRRGGQFYGRTSGNRVVNLAADVSLVGSIVNVMITRGDQNSLQGELCR.

The MTTase N-terminal domain maps to 5–121 (KLLYLETFGC…LPELVRAAEK (117 aa)). Residues cysteine 14, cysteine 50, cysteine 84, cysteine 159, cysteine 163, and cysteine 166 each coordinate [4Fe-4S] cluster. A Radical SAM core domain is found at 145–375 (RTDGVSRFVT…LDLQRRITLE (231 aa)). The TRAM domain maps to 378-440 (KSFVGTVQQV…QNSLQGELCR (63 aa)).

This sequence belongs to the methylthiotransferase family. MiaB subfamily. As to quaternary structure, monomer. [4Fe-4S] cluster serves as cofactor.

The protein resides in the cytoplasm. It catalyses the reaction N(6)-dimethylallyladenosine(37) in tRNA + (sulfur carrier)-SH + AH2 + 2 S-adenosyl-L-methionine = 2-methylsulfanyl-N(6)-dimethylallyladenosine(37) in tRNA + (sulfur carrier)-H + 5'-deoxyadenosine + L-methionine + A + S-adenosyl-L-homocysteine + 2 H(+). Catalyzes the methylthiolation of N6-(dimethylallyl)adenosine (i(6)A), leading to the formation of 2-methylthio-N6-(dimethylallyl)adenosine (ms(2)i(6)A) at position 37 in tRNAs that read codons beginning with uridine. In Geotalea uraniireducens (strain Rf4) (Geobacter uraniireducens), this protein is tRNA-2-methylthio-N(6)-dimethylallyladenosine synthase.